Reading from the N-terminus, the 64-residue chain is Large ribosomal subunit protein bL28 (64 aa).

The disordered stretch occupies residues 1–21 (MAKKDQLTLRGPLYGNNRSHS).

The protein belongs to the bacterial ribosomal protein bL28 family.

This is Large ribosomal subunit protein bL28 from Mycoplasma genitalium (strain ATCC 33530 / DSM 19775 / NCTC 10195 / G37) (Mycoplasmoides genitalium).